We begin with the raw amino-acid sequence, 297 residues long: Glutamyl-Q tRNA(Asp) synthetase (297 aa).

L-glutamate-binding positions include 7–11 and glutamate 43; that span reads RFAPS. The 'HIGH' region motif lies at 10 to 20; sequence PSPTGPLHFGS. Residues cysteine 99, cysteine 101, tyrosine 122, and cysteine 126 each coordinate Zn(2+). Positions 182 and 200 each coordinate L-glutamate. A 'KMSKS' region motif is present at residues 238 to 242; that stretch reads KLSKQ. Lysine 241 contacts ATP.

This sequence belongs to the class-I aminoacyl-tRNA synthetase family. GluQ subfamily. It depends on Zn(2+) as a cofactor.

Its function is as follows. Catalyzes the tRNA-independent activation of glutamate in presence of ATP and the subsequent transfer of glutamate onto a tRNA(Asp). Glutamate is transferred on the 2-amino-5-(4,5-dihydroxy-2-cyclopenten-1-yl) moiety of the queuosine in the wobble position of the QUC anticodon. The polypeptide is Glutamyl-Q tRNA(Asp) synthetase (Burkholderia pseudomallei (strain K96243)).